The primary structure comprises 152 residues: Superoxide dismutase [Cu-Zn] (152 aa).

Residues histidine 45, histidine 47, and histidine 62 each coordinate Cu cation. A disulfide bridge links cysteine 56 with cysteine 145. Positions 62, 70, 79, and 82 each coordinate Zn(2+). Histidine 119 is a binding site for Cu cation.

This sequence belongs to the Cu-Zn superoxide dismutase family. As to quaternary structure, homodimer. Requires Cu cation as cofactor. The cofactor is Zn(2+).

Its subcellular location is the cytoplasm. The enzyme catalyses 2 superoxide + 2 H(+) = H2O2 + O2. Its function is as follows. Destroys radicals which are normally produced within the cells and which are toxic to biological systems. This is Superoxide dismutase [Cu-Zn] (SODCC) from Paulownia kawakamii (Dragon tree).